The primary structure comprises 360 residues: Phospho-N-acetylmuramoyl-pentapeptide-transferase (360 aa).

Helical transmembrane passes span 26–46 (AILGVLTALIIAFLVGPAMIR), 70–90 (GTPTMGGALILVAVAVSTLLW), 97–117 (FVWVVLMVTLLFGLIGGIDDY), 134–154 (FFWQSVVGFATAILLYYTAQA), 168–188 (VAIQLGPWFILLTWFVIVGAS), 199–219 (GLAIMPTVLVAGAFGVFAYLS), 236–256 (VGDLVVFTGALVGAGLGFLWF), 263–283 (VFMGDVGALALGAALGVLAVV), 288–308 (IVLVIMGGVFVVETLSVIMQV), and 338–358 (VIVRFWIITVILVLVGLATLK).

It belongs to the glycosyltransferase 4 family. MraY subfamily. The cofactor is Mg(2+).

It localises to the cell inner membrane. It catalyses the reaction UDP-N-acetyl-alpha-D-muramoyl-L-alanyl-gamma-D-glutamyl-meso-2,6-diaminopimeloyl-D-alanyl-D-alanine + di-trans,octa-cis-undecaprenyl phosphate = di-trans,octa-cis-undecaprenyl diphospho-N-acetyl-alpha-D-muramoyl-L-alanyl-D-glutamyl-meso-2,6-diaminopimeloyl-D-alanyl-D-alanine + UMP. It participates in cell wall biogenesis; peptidoglycan biosynthesis. Its function is as follows. Catalyzes the initial step of the lipid cycle reactions in the biosynthesis of the cell wall peptidoglycan: transfers peptidoglycan precursor phospho-MurNAc-pentapeptide from UDP-MurNAc-pentapeptide onto the lipid carrier undecaprenyl phosphate, yielding undecaprenyl-pyrophosphoryl-MurNAc-pentapeptide, known as lipid I. This chain is Phospho-N-acetylmuramoyl-pentapeptide-transferase, found in Thioalkalivibrio sulfidiphilus (strain HL-EbGR7).